The sequence spans 709 residues: ATP-binding cassette sub-family F member 3 (709 aa).

N-acetylalanine is present on Ala-2. Positions 129–143 (RLKAKQEKRSEKETL) are enriched in basic and acidic residues. The segment at 129 to 171 (RLKAKQEKRSEKETLKTSSPLVLEEASASQAGSRKESRLESSG) is disordered. Residues Ser-155, Ser-157, and Ser-161 each carry the phosphoserine modification. Positions 161-171 (SRKESRLESSG) are enriched in basic and acidic residues. ABC transporter domains lie at 178–424 (VRIE…LNQQ) and 492–707 (LQLD…RREG). 210 to 217 (GRNGLGKT) serves as a coordination point for ATP. Phosphoserine is present on Ser-283. Position 525-532 (525-532 (GENGAGKS)) interacts with ATP.

The protein belongs to the ABC transporter superfamily. ABCF family. EF3 subfamily.

Displays an antiviral effect against flaviviruses such as west Nile virus (WNV) in the presence of OAS1B. The chain is ATP-binding cassette sub-family F member 3 (Abcf3) from Rattus norvegicus (Rat).